A 360-amino-acid polypeptide reads, in one-letter code: Ribosomal RNA large subunit methyltransferase F (360 aa).

The segment at 1 to 38 (MTRSTTPPMRAKHSSAKRSPSRSAAKVNPVSVKPNKPL) is disordered. Residues 10–20 (RAKHSSAKRSP) show a composition bias toward basic residues.

This sequence belongs to the methyltransferase superfamily. METTL16/RlmF family.

It localises to the cytoplasm. It carries out the reaction adenosine(1618) in 23S rRNA + S-adenosyl-L-methionine = N(6)-methyladenosine(1618) in 23S rRNA + S-adenosyl-L-homocysteine + H(+). In terms of biological role, specifically methylates the adenine in position 1618 of 23S rRNA. This chain is Ribosomal RNA large subunit methyltransferase F, found in Shewanella frigidimarina (strain NCIMB 400).